A 186-amino-acid polypeptide reads, in one-letter code: M-phase phosphoprotein 6 homolog (186 aa).

S2 is modified (N-acetylserine). 2 disordered regions span residues 22–47 (KFGK…VEPI) and 95–186 (SNVG…NSKK). Residues 32–42 (SNSNTPSNINS) are compositionally biased toward low complexity. S42 carries the phosphoserine modification. Basic and acidic residues predominate over residues 122–147 (SGSRKRKFDEGEQNEDEKRDAKDKEF). Residue S150 is modified to Phosphoserine. Over residues 168–186 (IKKKKTNHNGKNKNRNSKK) the composition is skewed to basic residues.

It belongs to the MPP6 family. In terms of assembly, associates with the RNA exosome complex.

It is found in the nucleus. Functionally, RNA-binding protein that associates with the RNA exosome complex. Involved in surveillance of pre-rRNAs and pre-mRNAs, and the degradation of cryptic non-coding RNAs (ncRNA) derived from intergenic regions and the ribosomal DNA spacer heterochromatin. The sequence is that of M-phase phosphoprotein 6 homolog (MPP6) from Saccharomyces cerevisiae (strain ATCC 204508 / S288c) (Baker's yeast).